The primary structure comprises 321 residues: ATP-dependent 6-phosphofructokinase (321 aa).

Gly12 is a binding site for ATP. Residues 22 to 26 (RGVVR) and 55 to 60 (RYSVSD) each bind ADP. ATP contacts are provided by residues 73-74 (RF) and 103-106 (GDGS). Residue Asp104 participates in Mg(2+) binding. Position 127–129 (127–129 (TID)) interacts with substrate. The active-site Proton acceptor is the Asp129. Position 156 (Arg156) interacts with ADP. Substrate is bound by residues Arg164 and 171–173 (MGR). Residues 187 to 189 (GCE), Arg213, and 215 to 217 (KRH) each bind ADP. Residues Glu224, Arg245, and 251–254 (HIQR) each bind substrate.

Belongs to the phosphofructokinase type A (PFKA) family. ATP-dependent PFK group I subfamily. Prokaryotic clade 'B1' sub-subfamily. Homotetramer. The cofactor is Mg(2+).

The protein resides in the cytoplasm. It catalyses the reaction beta-D-fructose 6-phosphate + ATP = beta-D-fructose 1,6-bisphosphate + ADP + H(+). It participates in carbohydrate degradation; glycolysis; D-glyceraldehyde 3-phosphate and glycerone phosphate from D-glucose: step 3/4. Allosterically activated by ADP and other diphosphonucleosides, and allosterically inhibited by phosphoenolpyruvate. Functionally, catalyzes the phosphorylation of D-fructose 6-phosphate to fructose 1,6-bisphosphate by ATP, the first committing step of glycolysis. This chain is ATP-dependent 6-phosphofructokinase, found in Haemophilus influenzae (strain PittEE).